The primary structure comprises 412 residues: Putative competence-damage inducible protein (412 aa).

It belongs to the CinA family.

The polypeptide is Putative competence-damage inducible protein (Bacillus thuringiensis (strain Al Hakam)).